Here is a 167-residue protein sequence, read N- to C-terminus: Transmembrane protein B169L (167 aa).

Transmembrane regions (helical) follow at residues 28-48 (NPFI…FAIC) and 60-80 (TAIY…YVLN). The N-linked (GlcNAc...) asparagine; by host glycan is linked to Asn88.

The protein belongs to the asfivirus B169L family.

The protein resides in the host membrane. Its subcellular location is the virion. The protein is Transmembrane protein B169L of African swine fever virus (isolate Tick/Malawi/Lil 20-1/1983) (ASFV).